Reading from the N-terminus, the 547-residue chain is MAAKEIIFSEKARSRMVHGVNLLANAVKATLGPKGRHVVLDKSFGSPIITKDGVSVAKEIELADKFENMGAQMLKEVASKTNDHAGDGTTTATVLAQALIREGCKAVAAGMNPMDLKRGIDKAVIAAVTELKKISKPTSDDKAIAQVATISANSDESIGNIIAEAMKKVGKEGVITIEEGTTLENELDVVEGMQFDRGYSSPYFINNQQSQIVELDNPYILLHDKKISSVRDLLTVLDAVAKESKPLLIVAEEVEGEALATLVVNNIRGIIKVCAVKAPGFGDRRKAMLEDMAVLTGGTVISEEVGLSLEKATTSHLGKAKKVRVSKENTTIIDGIGDNDAINGRVKQIKTQIEETTSDYDREKLQERVAKLAGGVAVIKVGAATEVEMKEKKARVDDALLATRAAVEEGVIPGGGVALIRAITAISNLKGANEDQTHGIQIALRAMEAPLREIVANAGEEPSVILNKVKEGKDNFGYNAATGEFGDMVNLGILDPTKVTRSALQNAASIAGLMITTEAMVAEAPKKDEPTPPAAGGGMGGMGGMDF.

ATP-binding positions include 30-33, Lys51, 87-91, Gly415, 479-481, and Asp495; these read TLGP, DGTTT, and NAA. The tract at residues 524–547 is disordered; sequence APKKDEPTPPAAGGGMGGMGGMDF. Over residues 535 to 547 the composition is skewed to gly residues; that stretch reads AGGGMGGMGGMDF.

The protein belongs to the chaperonin (HSP60) family. Forms a cylinder of 14 subunits composed of two heptameric rings stacked back-to-back. Interacts with the co-chaperonin GroES.

It localises to the cytoplasm. It carries out the reaction ATP + H2O + a folded polypeptide = ADP + phosphate + an unfolded polypeptide.. Functionally, together with its co-chaperonin GroES, plays an essential role in assisting protein folding. The GroEL-GroES system forms a nano-cage that allows encapsulation of the non-native substrate proteins and provides a physical environment optimized to promote and accelerate protein folding. The sequence is that of Chaperonin GroEL from Xylella fastidiosa (strain 9a5c).